The primary structure comprises 413 residues: Peptidase T (413 aa).

H82 contributes to the Zn(2+) binding site. D84 is an active-site residue. D144 is a Zn(2+) binding site. The active-site Proton acceptor is the E178. Residues E179, D201, and H383 each contribute to the Zn(2+) site.

It belongs to the peptidase M20B family. As to quaternary structure, homotrimer. It depends on Zn(2+) as a cofactor.

It localises to the cytoplasm. It carries out the reaction Release of the N-terminal residue from a tripeptide.. Totally inhibited by EDTA, EGTA, and 1,10-phenanthroline. Strongly inhibited by divalent cations such as Cu(2+), Cd(2+), Co(2+) and Mn(2+). Partially inhibited by the reducing agents 2-mercaptoethanol and dithiothreitol. In terms of biological role, cleaves the N-terminal amino acid of tripeptides. Shows broad substrate specificity, exhibiting maximum activity against hydrophobic tripeptides, with the highest activity for Met-Gly-Gly. Therefore this enzyme may play an important role in flavor formation during cheese ripening. Is also able to slowly hydrolyze some hydrophobic dipeptides, but displays no activity against tetrapeptides and the tripeptide Phe-Gly-Gly. This Lactobacillus helveticus (Lactobacillus suntoryeus) protein is Peptidase T (pepT).